A 37-amino-acid chain; its full sequence is Large ribosomal subunit protein bL36c (37 aa).

This sequence belongs to the bacterial ribosomal protein bL36 family.

Its subcellular location is the plastid. The protein localises to the chloroplast. The chain is Large ribosomal subunit protein bL36c from Chara vulgaris (Common stonewort).